The primary structure comprises 518 residues: Tropomyosin-1, isoforms 33/34 (518 aa).

Positions Asp-14–Tyr-267 form a coiled coil. Disordered regions lie at residues Arg-101–Arg-125 and Phe-288–Ala-518. Positions Asn-293–Thr-305 are enriched in pro residues. The segment covering Ala-318 to Pro-348 has biased composition (low complexity). Composition is skewed to pro residues over residues Glu-357–Phe-374 and Glu-394–Val-405. Low complexity predominate over residues Pro-406–Ala-518.

The protein belongs to the tropomyosin family. As to quaternary structure, homodimer. In terms of tissue distribution, both isoforms are only expressed in indirect flight muscles.

It localises to the cytoplasm. The protein resides in the cytoskeleton. Tropomyosin, in association with the troponin complex, plays a central role in the calcium dependent regulation of muscle contraction. The sequence is that of Tropomyosin-1, isoforms 33/34 (Tm1) from Drosophila melanogaster (Fruit fly).